The chain runs to 337 residues: Ferredoxin--NADP reductase (337 aa).

FAD is bound by residues D35, Q43, Y48, A88, F122, D289, and T330.

This sequence belongs to the ferredoxin--NADP reductase type 2 family. In terms of assembly, homodimer. It depends on FAD as a cofactor.

It catalyses the reaction 2 reduced [2Fe-2S]-[ferredoxin] + NADP(+) + H(+) = 2 oxidized [2Fe-2S]-[ferredoxin] + NADPH. In Ehrlichia ruminantium (strain Gardel), this protein is Ferredoxin--NADP reductase.